Here is a 78-residue protein sequence, read N- to C-terminus: Large ribosomal subunit protein bL28 (78 aa).

Residues 1-26 (MARVCQVTGKRPMSGHNVSHANNKTK) are disordered.

Belongs to the bacterial ribosomal protein bL28 family.

The sequence is that of Large ribosomal subunit protein bL28 from Nitrosomonas europaea (strain ATCC 19718 / CIP 103999 / KCTC 2705 / NBRC 14298).